A 335-amino-acid chain; its full sequence is Probable magnesium transporter NIPA1 (335 aa).

The Extracellular portion of the chain corresponds to 1 to 7 (MDQMSPD). Residues 8-28 (NINGVILAVSSSIFIGSSFII) traverse the membrane as a helical segment. Over 29–55 (KKKGLKKAGASGVRAGEGGYGYLKEPW) the chain is Cytoplasmic. The chain crosses the membrane as a helical span at residues 56-76 (WWAGMITMIVGEVANFAAYAF). Over 77-79 (APA) the chain is Extracellular. The chain crosses the membrane as a helical span at residues 80–100 (ILVTPLGALSIIFSAVLAHFI). The Cytoplasmic segment spans residues 101 to 104 (LKEK). A helical transmembrane segment spans residues 105-125 (LHMFGILGCILCVVGSTTIVL). Topologically, residues 126-143 (HAPHEQKIESVKQIWQLA) are extracellular. A helical transmembrane segment spans residues 144 to 164 (IEPGFLVYSAVIVIVVAILIF). Residues 165–179 (YYEPRYGKTHMIVYV) lie on the Cytoplasmic side of the membrane. The chain crosses the membrane as a helical span at residues 180 to 200 (GICSLMGSLTVMSVKAVAIAI). The Extracellular portion of the chain corresponds to 201 to 212 (KLTFSGTNQFKY). The chain crosses the membrane as a helical span at residues 213-233 (FNTWIFILVVATCCILQINYL). Residues 234 to 244 (NKALDTFNTAV) are Cytoplasmic-facing. The helical transmembrane segment at 245–265 (ISPVYYVMFTTFTIIASMIMF) threads the bilayer. Residues 266-272 (KDWASQS) are Extracellular-facing. A helical transmembrane segment spans residues 273-293 (GLKIATELCGFVTILSGTFLL). At 294–335 (HKTKDMGNSASGRGSISMPTRDTPVFTNSGSGRSSSSDKVAS) the chain is on the cytoplasmic side. Positions 303–321 (ASGRGSISMPTRDTPVFTN) are enriched in polar residues. The tract at residues 303 to 335 (ASGRGSISMPTRDTPVFTNSGSGRSSSSDKVAS) is disordered. A compositionally biased stretch (low complexity) spans 322-335 (SGSGRSSSSDKVAS).

The protein belongs to the NIPA (TC 2.A.7) family. As to quaternary structure, homodimer.

The protein resides in the cell membrane. It localises to the early endosome. Functionally, acts as a Mg(2+) transporter. Can also transport other divalent cations such as Fe(2+), Sr(2+), Ba(2+), Mn(2+) and Co(2+) but to a much less extent than Mg(2+). In Arabidopsis thaliana (Mouse-ear cress), this protein is Probable magnesium transporter NIPA1.